The chain runs to 322 residues: Protein farnesyltransferase/geranylgeranyltransferase type-1 subunit alpha (322 aa).

The interval 1–27 (MSSSEEDDGYVPFSKRPEWSDVKPLAQ) is disordered. 6 PFTA repeats span residues 62 to 95 (RVLD…EQDE), 103 to 136 (QEMN…IGSD), 138 to 171 (KEKE…RDWN), 173 to 205 (ELAM…NPSP), 213 to 246 (REVE…KIST), and 287 to 321 (NSLN…LKLI).

It belongs to the protein prenyltransferase subunit alpha family. Heterodimer of fntA and fntB (farnesyltransferase). Heterodimer of an alpha and a beta subunit. Mg(2+) is required as a cofactor.

It catalyses the reaction L-cysteinyl-[protein] + (2E,6E)-farnesyl diphosphate = S-(2E,6E)-farnesyl-L-cysteinyl-[protein] + diphosphate. It carries out the reaction geranylgeranyl diphosphate + L-cysteinyl-[protein] = S-geranylgeranyl-L-cysteinyl-[protein] + diphosphate. Functionally, catalyzes the transfer of a farnesyl or geranyl-geranyl moiety from farnesyl or geranyl-geranyl diphosphate to a cysteine at the fourth position from the C-terminus of several proteins having the C-terminal sequence Cys-aliphatic-aliphatic-X. The alpha subunit is thought to participate in a stable complex with the substrate. The beta subunit binds the peptide substrate. The polypeptide is Protein farnesyltransferase/geranylgeranyltransferase type-1 subunit alpha (fntA) (Dictyostelium discoideum (Social amoeba)).